The chain runs to 195 residues: MRQADVTRNTSETKIQISINLDGTGKAELASGVPFLDHMLDQIARHGMIDLKVVANGDAHIDDHHTVEDVGITLGQAFAKAVGDKVGITRYGHSYVPLDETLSRIVIDFSGRPGLEFNVPFTRARVGDFDVDLSIEFFRGFVNHAGVTLHIDNLRGINAHHQIETVFKAFGRALRMALAVDPRASGSIPSTKGSL.

The protein belongs to the imidazoleglycerol-phosphate dehydratase family.

It localises to the cytoplasm. The catalysed reaction is D-erythro-1-(imidazol-4-yl)glycerol 3-phosphate = 3-(imidazol-4-yl)-2-oxopropyl phosphate + H2O. It participates in amino-acid biosynthesis; L-histidine biosynthesis; L-histidine from 5-phospho-alpha-D-ribose 1-diphosphate: step 6/9. The polypeptide is Imidazoleglycerol-phosphate dehydratase (Polynucleobacter necessarius subsp. necessarius (strain STIR1)).